The sequence spans 580 residues: MVLRIRRIKKLAPLIFTSLLSLIVLFRVYRQYPFSDHFETRREDDRSGNVHCFSRLRQIEEYEKPELTSKFYEPNRWKSFISYVTRSRKDVKTVSRSLSNLDLYQKCSKEIRADQDISLLHSIETKLFPYINFTALNSEQSHNFWPVHTRFDGTKYRGQVLQFSSENNSFIGTSPIEFKASEPFWENWLNSALQRNSKGVVMSVSEYLVADTIRLIRVLRLLNNSLPIEIVHKSDLHESSQQLLIAAARESGSLNYPPQELWFLDVKDMLNDEYLARFKRFSNKWLAITFCSFQIPIFLDSDTVPFVPLDTLYEIDGFKRTGTLFFKDRSFPTSKLSPLQVKVLKQIINNSLDVSSDSEQGFEILKHNLNDEMAIDAIEALIFKKQKHYMDSGLVIFDKQKHFFCLPIAIMLQFSPIQEFFHGDKEWFWLSLFISKKEFTFYPIEASNVGRLEKPETLESSTICSTQLSHTDVYGNLLWLNGGLSVCKKNCWNYDFTKRKEIAAKYKSVDELRNYYQSPVKLEAVIIPDVSKSPWSQQSECVMYSYCTHYRKGQYGKLIEFTDSQKKYYEKVVELWNKVV.

Topologically, residues 1-10 are cytoplasmic; that stretch reads MVLRIRRIKK. The helical; Signal-anchor for type II membrane protein transmembrane segment at 11-29 threads the bilayer; the sequence is LAPLIFTSLLSLIVLFRVY. The Lumenal segment spans residues 30-580; sequence RQYPFSDHFE…KVVELWNKVV (551 aa). Asn132, Asn167, Asn223, and Asn349 each carry an N-linked (GlcNAc...) asparagine glycan.

Belongs to the MNN1/MNT family.

The protein localises to the membrane. The polypeptide is Probable alpha-1,3-mannosyltransferase MNT4 (MNT4) (Saccharomyces cerevisiae (strain ATCC 204508 / S288c) (Baker's yeast)).